The sequence spans 478 residues: Proline--tRNA ligase (478 aa).

It belongs to the class-II aminoacyl-tRNA synthetase family. ProS type 3 subfamily. As to quaternary structure, homodimer.

Its subcellular location is the cytoplasm. The enzyme catalyses tRNA(Pro) + L-proline + ATP = L-prolyl-tRNA(Pro) + AMP + diphosphate. Catalyzes the attachment of proline to tRNA(Pro) in a two-step reaction: proline is first activated by ATP to form Pro-AMP and then transferred to the acceptor end of tRNA(Pro). This Clostridium botulinum (strain 657 / Type Ba4) protein is Proline--tRNA ligase.